Here is a 485-residue protein sequence, read N- to C-terminus: MAAAQPRLPAGAAMVRRLARGCWSAFWDYETPKVIVVRNRRLGFVHRMVQLLILLYFVWYVFIVQKSYQDSETGPESSIITKVKGITMSEHKVWDVEEYVKPPEGGSVVSIITRIEVTPSQTLGTCPESMRVHSSTCHLDDDCVAGQLDMQGNGIRTGRCVPYYHGDSKTCEVSAWCPVEDGTSENHFLGKMAPNFTILIKNSIHYPKFKFSKGNIASQKSDYLKHCTFDQDSDPYCPIFRLGFIVEQAGENFTELAHKGGVIGVIINWNCDLDLSESECNPKYSFRRLDPKYDPASSGYNFRFAKYYKINGTTTTRTLIKAYGIRIDVIVHGQAGKFSLIPTIINLATALTSIGVGSFLCDWILLTFMNKNKLYSHKKFDKVRTPRHPSSRWPVTLALVLGQIPPPPSHYSQDQPPSLPSGEGPALGEGAELPLAVQPPRSCSSSALTEQVVDTLDQHMGQRPPVPEPSQQDSTSTDPKGLAQL.

Topologically, residues 1–43 (MAAAQPRLPAGAAMVRRLARGCWSAFWDYETPKVIVVRNRRLG) are cytoplasmic. Cystine bridges form between cysteine 22-cysteine 443, cysteine 126-cysteine 177, cysteine 137-cysteine 160, cysteine 143-cysteine 171, cysteine 227-cysteine 237, and cysteine 271-cysteine 280. A helical membrane pass occupies residues 44-64 (FVHRMVQLLILLYFVWYVFIV). The Extracellular portion of the chain corresponds to 65–339 (QKSYQDSETG…IVHGQAGKFS (275 aa)). Positions 82 and 84 each coordinate ATP. Asparagine 195 carries N-linked (GlcNAc...) asparagine glycosylation. Threonine 197 contacts ATP. An N-linked (GlcNAc...) asparagine glycan is attached at asparagine 252. The ATP site is built by serine 297, asparagine 301, and arginine 303. Asparagine 311 is a glycosylation site (N-linked (GlcNAc...) asparagine). Lysine 321 contacts ATP. Residues 322 to 335 (AYGIRIDVIVHGQA) form a pore-forming motif region. Residues 340-360 (LIPTIINLATALTSIGVGSFL) form a helical membrane-spanning segment. At 361 to 485 (CDWILLTFMN…STDPKGLAQL (125 aa)) the chain is on the cytoplasmic side. Positions 406–485 (PPPSHYSQDQ…STDPKGLAQL (80 aa)) are disordered. The span at 420–436 (PSGEGPALGEGAELPLA) shows a compositional bias: low complexity. Residues 469-478 (PSQQDSTSTD) are compositionally biased toward polar residues.

This sequence belongs to the P2X receptor family. As to quaternary structure, homotrimer and heterotrimer; functional P2XRs are organized as homomeric and heteromeric trimers. Homotrimer. Forms heterotrimer with P2XR1. Forms heterotrimer with P2XR3. Forms heterotrimer with P2XR6.

Its subcellular location is the cell membrane. It catalyses the reaction Ca(2+)(in) = Ca(2+)(out). The catalysed reaction is K(+)(in) = K(+)(out). The enzyme catalyses Na(+)(in) = Na(+)(out). With respect to regulation, fast activation by external ATP. Exhibits slow desensitization during prolonged ATP activation. Not sensitive to the ATP agonist:alpha/beta-methylene-ATP. Its function is as follows. ATP-gated nonselective transmembrane cation channel permeable to potassium, sodium and calcium. Activation by extracellular ATP induces a variety of cellular responses, such as excitatory postsynaptic responses in sensory neurons, neuromuscular junctions (NMJ) formation, hearing, perception of taste and peristalsis. In the inner ear, regulates sound transduction and auditory neurotransmission, outer hair cell electromotility, inner ear gap junctions, and K(+) recycling. Mediates synaptic transmission between neurons and from neurons to smooth muscle. The polypeptide is P2X purinoceptor 2 (P2rx2) (Mus musculus (Mouse)).